The sequence spans 389 residues: Oxytocin receptor (389 aa).

A disordered region spans residues 1-27 (MEGELAANWSTEAVNSSAAPPGAEGNC). Over 1-38 (MEGELAANWSTEAVNSSAAPPGAEGNCTAGPPRRNEAL) the chain is Extracellular. 3 N-linked (GlcNAc...) asparagine glycosylation sites follow: Asn-8, Asn-15, and Asn-26. The segment covering 8–18 (NWSTEAVNSSA) has biased composition (polar residues). The helical transmembrane segment at 39–63 (ARVEVAVLCLILFLALSGNACVLLA) threads the bilayer. At 64-74 (LRTTRHKHSRL) the chain is on the cytoplasmic side. A helical membrane pass occupies residues 75–97 (FFFMKHLSIADLVVAVFQVLPQL). Residues 98–113 (LWDITFRFYGPDLLCR) lie on the Extracellular side of the membrane. Cys-112 and Cys-187 form a disulfide bridge. Residues 114–135 (LVKYLQVVGMFASTYLLLLMSL) traverse the membrane as a helical segment. Residues 136–154 (DRCLAICQPLRSLRRRTDR) lie on the Cytoplasmic side of the membrane. A helical transmembrane segment spans residues 155-175 (LAVLATWLGCLVASAPQVHIF). The Extracellular segment spans residues 176 to 202 (SLREVADGVFDCWAVFIQPWGPKAYIT). Residues 203–225 (WITLAVYIVPVIVLAACYGLISF) traverse the membrane as a helical segment. Over 226 to 275 (KIWQNLRLKTAAAAAAEAPEGAAAGDGGRMALARVSSVKLISKAKIRTVK) the chain is Cytoplasmic. A helical transmembrane segment spans residues 276 to 294 (MTFIIVLAFIVCWTPFFFV). Residues 295–309 (QMWSVWDANAPKEAS) are Extracellular-facing. A helical transmembrane segment spans residues 310–332 (AFIIVMLLASLNSCCNPWIYMLF). Residues 333 to 389 (TGHLFHELVQRFLCCSASYLKGNRLGETSTSKKSNSSSFVLSHRSSSQRSCSQPSTA) are Cytoplasmic-facing. The disordered stretch occupies residues 358–389 (GETSTSKKSNSSSFVLSHRSSSQRSCSQPSTA). A compositionally biased stretch (low complexity) spans 360–389 (TSTSKKSNSSSFVLSHRSSSQRSCSQPSTA). Phosphoserine is present on residues Ser-366 and Ser-368.

It belongs to the G-protein coupled receptor 1 family. Vasopressin/oxytocin receptor subfamily.

The protein resides in the cell membrane. Its function is as follows. Receptor for oxytocin. The activity of this receptor is mediated by G proteins which activate a phosphatidylinositol-calcium second messenger system. The sequence is that of Oxytocin receptor (OXTR) from Macaca mulatta (Rhesus macaque).